The chain runs to 247 residues: MKFFQEQIAIKETNILLKVDNPKFFKMAKNAVINERLNLENYILRNPIFLTSYSPLEVPDNAPKIVKLMAEAGFNADVGPMAAVAGTFSQLIVENLIENDCKNAISENGGDICLKCEMDTTVGLYAGNSSLSGNLGFKLKKEKMKNGYGICTSSGTVGHSVSFGNADSVTVFSKSAIIADAAATSIGNFAVGNAVDAMNNCLEKAETISKIDGVFVCMGEHAGKIGKIPQLIKTDKKEVLGNVFEMV.

It belongs to the UPF0280 family.

This Methanococcus maripaludis (strain C5 / ATCC BAA-1333) protein is UPF0280 protein MmarC5_0355.